Reading from the N-terminus, the 38-residue chain is Photosystem II reaction center protein L (38 aa).

The helical transmembrane segment at 17 to 37 (SLYWGLLLIFVLAVLFSSYFF) threads the bilayer.

This sequence belongs to the PsbL family. In terms of assembly, PSII is composed of 1 copy each of membrane proteins PsbA, PsbB, PsbC, PsbD, PsbE, PsbF, PsbH, PsbI, PsbJ, PsbK, PsbL, PsbM, PsbT, PsbX, PsbY, PsbZ, Psb30/Ycf12, at least 3 peripheral proteins of the oxygen-evolving complex and a large number of cofactors. It forms dimeric complexes.

The protein resides in the plastid. The protein localises to the chloroplast thylakoid membrane. In terms of biological role, one of the components of the core complex of photosystem II (PSII). PSII is a light-driven water:plastoquinone oxidoreductase that uses light energy to abstract electrons from H(2)O, generating O(2) and a proton gradient subsequently used for ATP formation. It consists of a core antenna complex that captures photons, and an electron transfer chain that converts photonic excitation into a charge separation. This subunit is found at the monomer-monomer interface and is required for correct PSII assembly and/or dimerization. This is Photosystem II reaction center protein L from Ephedra sinica (Chinese ephedra).